The chain runs to 735 residues: Catalase-peroxidase (735 aa).

Polar residues predominate over residues 1–26; the sequence is MENQNRQNASQCPFHGSITNQSSNRT. Positions 1–29 are disordered; sequence MENQNRQNASQCPFHGSITNQSSNRTTNK. A cross-link (tryptophyl-tyrosyl-methioninium (Trp-Tyr) (with M-249)) is located at residues 100–223; it reads WHSAGTYRIG…LAASVMGLIY (124 aa). The active-site Proton acceptor is the histidine 101. The segment at residues 223–249 is a cross-link (tryptophyl-tyrosyl-methioninium (Tyr-Met) (with W-100)); that stretch reads YVNPEGPDGKPDPKAAARDIRETFRRM. A heme b-binding site is contributed by histidine 264.

This sequence belongs to the peroxidase family. Peroxidase/catalase subfamily. Homodimer or homotetramer. Heme b is required as a cofactor. In terms of processing, formation of the three residue Trp-Tyr-Met cross-link is important for the catalase, but not the peroxidase activity of the enzyme.

It catalyses the reaction H2O2 + AH2 = A + 2 H2O. The enzyme catalyses 2 H2O2 = O2 + 2 H2O. In terms of biological role, bifunctional enzyme with both catalase and broad-spectrum peroxidase activity. This chain is Catalase-peroxidase, found in Geobacillus thermodenitrificans (strain NG80-2).